The chain runs to 154 residues: NADPH-dependent 7-cyano-7-deazaguanine reductase (154 aa).

Basic and acidic residues predominate over residues 1 to 11 (MAKKPVKDLKQ). The tract at residues 1 to 31 (MAKKPVKDLKQLGHATPVPASPEEATLERVP) is disordered. Cys52 serves as the catalytic Thioimide intermediate. Catalysis depends on Asp59, which acts as the Proton donor. Substrate contacts are provided by residues 74-76 (IES) and 93-94 (HE).

It belongs to the GTP cyclohydrolase I family. QueF type 1 subfamily.

It is found in the cytoplasm. The enzyme catalyses 7-aminomethyl-7-carbaguanine + 2 NADP(+) = 7-cyano-7-deazaguanine + 2 NADPH + 3 H(+). It functions in the pathway tRNA modification; tRNA-queuosine biosynthesis. Catalyzes the NADPH-dependent reduction of 7-cyano-7-deazaguanine (preQ0) to 7-aminomethyl-7-deazaguanine (preQ1). The polypeptide is NADPH-dependent 7-cyano-7-deazaguanine reductase (Parvibaculum lavamentivorans (strain DS-1 / DSM 13023 / NCIMB 13966)).